Reading from the N-terminus, the 248-residue chain is Isoprenyl transferase (248 aa).

The active site involves aspartate 28. Aspartate 28 contributes to the Mg(2+) binding site. Substrate is bound by residues 29-32 (GNGR), tryptophan 33, arginine 41, histidine 45, and 73-75 (SSE). Catalysis depends on asparagine 76, which acts as the Proton acceptor. Substrate is bound by residues tryptophan 77, arginine 79, arginine 196, and 202–204 (RLS). A Mg(2+)-binding site is contributed by glutamate 215.

It belongs to the UPP synthase family. As to quaternary structure, homodimer. Mg(2+) serves as cofactor.

Functionally, catalyzes the condensation of isopentenyl diphosphate (IPP) with allylic pyrophosphates generating different type of terpenoids. The chain is Isoprenyl transferase from Zymomonas mobilis subsp. mobilis (strain ATCC 31821 / ZM4 / CP4).